Reading from the N-terminus, the 250-residue chain is Acetylglutamate kinase (250 aa).

Substrate is bound by residues 41–42, Arg-63, and Asn-156; that span reads GG.

Belongs to the acetylglutamate kinase family. ArgB subfamily.

The protein localises to the cytoplasm. The catalysed reaction is N-acetyl-L-glutamate + ATP = N-acetyl-L-glutamyl 5-phosphate + ADP. Its pathway is amino-acid biosynthesis; L-arginine biosynthesis; N(2)-acetyl-L-ornithine from L-glutamate: step 2/4. Its function is as follows. Catalyzes the ATP-dependent phosphorylation of N-acetyl-L-glutamate. The protein is Acetylglutamate kinase of Listeria welshimeri serovar 6b (strain ATCC 35897 / DSM 20650 / CCUG 15529 / CIP 8149 / NCTC 11857 / SLCC 5334 / V8).